A 664-amino-acid polypeptide reads, in one-letter code: Serine/threonine-protein kinase PknD (664 aa).

The Cytoplasmic segment spans residues 1-381; the sequence is MSDAVPQVGS…PAGNKRKVWA (381 aa). A Protein kinase domain is found at 15 to 276; the sequence is YQLLRLLGRG…DLAIAAHDAL (262 aa). Residues 21 to 29 and Lys-44 each bind ATP; that span reads LGRGGMGEV. A Phosphothreonine; by autocatalysis modification is found at Thr-135. Asp-138 serves as the catalytic Proton acceptor. 4 positions are modified to phosphothreonine; by autocatalysis: Thr-169, Thr-171, Thr-173, and Thr-209. The interval 303–333 is disordered; the sequence is TGLSQSESGIAGAGTGPPTPGAARWSPGDSA. The helical transmembrane segment at 382–402 threads the bilayer; it reads VVGAAAIVLVAIVAAAGYLVL. The Extracellular portion of the chain corresponds to 403–664; sequence RPSWSPTQAS…GNDRVVKLTS (262 aa). 6 NHL repeats span residues 414–456, 457–497, 498–539, 540–581, 582–623, and 624–664; these read QTVL…LATG, STGT…LAAG, SNNQ…LAAG, SKTQ…LEAE, SNNQ…LLAG, and STTS…KLTS.

The protein belongs to the protein kinase superfamily. Ser/Thr protein kinase family. As to quaternary structure, homodimer. The extracellular domain interacts with host laminin. Post-translationally, autophosphorylated. Dephosphorylated by PstP.

It is found in the cell membrane. The enzyme catalyses L-seryl-[protein] + ATP = O-phospho-L-seryl-[protein] + ADP + H(+). It carries out the reaction L-threonyl-[protein] + ATP = O-phospho-L-threonyl-[protein] + ADP + H(+). Dimerization activates the kinase domain of unphosphorylated PknD via an allosteric mechanism, triggering autophosphorylation and phosphorylation of target proteins. Phosphorylated PknD is fully active even in the absence of dimerization. Its function is as follows. Part of a signaling pathway that enables adaptation to osmotic stress through cell wall remodeling and virulence factor production. Functionally, key microbial factor required for central nervous system tuberculosis. Required for invasion of host brain endothelia, but not macrophages, lung epithelia or other endothelia. This chain is Serine/threonine-protein kinase PknD (pknD), found in Mycobacterium tuberculosis (strain CDC 1551 / Oshkosh).